A 459-amino-acid polypeptide reads, in one-letter code: Siroheme synthase 2 (459 aa).

A precorrin-2 dehydrogenase /sirohydrochlorin ferrochelatase region spans residues 1–204 (MDYLPIFCQL…EDRERVQQLT (204 aa)). NAD(+)-binding positions include 22–23 (EI) and 43–44 (LD). A Phosphoserine modification is found at Ser-128. The uroporphyrinogen-III C-methyltransferase stretch occupies residues 216 to 459 (GEVTLVGAGP…KLSWFSDQTA (244 aa)). Pro-225 is an S-adenosyl-L-methionine binding site. Asp-248 (proton acceptor) is an active-site residue. Catalysis depends on Lys-270, which acts as the Proton donor. S-adenosyl-L-methionine-binding positions include 301–303 (GGD), Ile-306, 331–332 (TA), Met-382, and Gly-411.

In the N-terminal section; belongs to the precorrin-2 dehydrogenase / sirohydrochlorin ferrochelatase family. The protein in the C-terminal section; belongs to the precorrin methyltransferase family.

The enzyme catalyses uroporphyrinogen III + 2 S-adenosyl-L-methionine = precorrin-2 + 2 S-adenosyl-L-homocysteine + H(+). It carries out the reaction precorrin-2 + NAD(+) = sirohydrochlorin + NADH + 2 H(+). It catalyses the reaction siroheme + 2 H(+) = sirohydrochlorin + Fe(2+). Its pathway is cofactor biosynthesis; adenosylcobalamin biosynthesis; precorrin-2 from uroporphyrinogen III: step 1/1. It participates in cofactor biosynthesis; adenosylcobalamin biosynthesis; sirohydrochlorin from precorrin-2: step 1/1. The protein operates within porphyrin-containing compound metabolism; siroheme biosynthesis; precorrin-2 from uroporphyrinogen III: step 1/1. It functions in the pathway porphyrin-containing compound metabolism; siroheme biosynthesis; siroheme from sirohydrochlorin: step 1/1. Its pathway is porphyrin-containing compound metabolism; siroheme biosynthesis; sirohydrochlorin from precorrin-2: step 1/1. In terms of biological role, multifunctional enzyme that catalyzes the SAM-dependent methylations of uroporphyrinogen III at position C-2 and C-7 to form precorrin-2 via precorrin-1. Then it catalyzes the NAD-dependent ring dehydrogenation of precorrin-2 to yield sirohydrochlorin. Finally, it catalyzes the ferrochelation of sirohydrochlorin to yield siroheme. In Pectobacterium atrosepticum (strain SCRI 1043 / ATCC BAA-672) (Erwinia carotovora subsp. atroseptica), this protein is Siroheme synthase 2.